Reading from the N-terminus, the 776-residue chain is MGKIVRISGPVVVAEDIENAKMYDVVKVGEMGLIGEIIRIEGNRSTIQVYEDTAGIRPDEKVENTMRPLSVELGPGLLKSIYDGIQRPLDVIKETSGDFIARGLNPPPLDRKKEWDFVPAVKKNDIVYPGQVIGTVQETSLITHRIIVPDGVSGKIKSIYEGKRTVEDVVCTISTEHGDVDVNLMTTWPVRKARRVVRKLPPEIPLVTGQRVIDALFPVAKGGTAAVPGPFGSGKCVSGETPVYLADGKTIKIKDLYSSERKKEDNIVEAGSGEEIIHLKDPIQIYSYVDGTIVRSRSRLLYKGKSSYLVRIETIGGRSVSVTPVHKLFVLTEKGIEEVMASNLKVGDMIAAVAESESEARDCGMSEECVMEAEVYTSLEATFDRVKSIAYEKGDFDVYDLSVPEYGRNFIGGEGLLVLHNTVIQHQLAKWSDANIVVYIGCGERGNEMTEILTTFPELKDPVSGQPLMDRTVLIANTSNMPVAAREASIYTGITIAEYYRDMGYDVALMADSTSRWAEALREISGRLEEMPGEEGYPAYLGRRISEFYERSGRARLVSPEDRFGSITVIGAVSPPGGDISEPVSQNTLRVTRVFWALDASLANRRHFPSINWLNSYSLYTEDLRHWYDENVAKDWGSLRSQAMDILQRESELQEVAQLVGYDAMPEKEKSILDVARIIREDFLQQSAFDEIDSYCSLRKQYLMLKAIMELNSYQSMAIDHGVTMDNLSSLPVREKLSRMKIVPEDQVESYYSSIIKEIHKEYTSFIGEKNAEANI.

Belongs to the ATPase alpha/beta chains family. Has multiple subunits with at least A(3), B(3), C, D, E, F, H, I and proteolipid K(x). This protein undergoes a protein self splicing that involves a post-translational excision of the VDE intervening region (intein) followed by peptide ligation.

It is found in the cell membrane. The catalysed reaction is ATP + H2O + 4 H(+)(in) = ADP + phosphate + 5 H(+)(out). Component of the A-type ATP synthase that produces ATP from ADP in the presence of a proton gradient across the membrane. The A chain is the catalytic subunit. The polypeptide is A-type ATP synthase subunit A (Thermoplasma volcanium (strain ATCC 51530 / DSM 4299 / JCM 9571 / NBRC 15438 / GSS1)).